The primary structure comprises 423 residues: MPLPQKKRWESMAKGLVLGALFTSFLLLLYSYAVPPLYTGLASTTPEGAAPCSPAPREPEAPTSANGSAGGCQPRRDIVFMKTHKTASSTLLNILFRFGQKHGLKFAFPNGRNDFDYPAFFARSLVQDYRPGACFNIICNHMRFHYDEVRGLVAPNATFITVLRDPARLFESSFHYFGSVVPFTWKLSGRDKLAEFLQDPDRYYDARGYNAHYLRNLLFFDLGYDSDLDPSSPQVQEHILEVERHFHLVLLQEYFDESLVLLKDLLCWELEDVLYFKLNARRASAVPRLSGELYRRATAWNVLDARLYRHFNASFWRKVEAFGRERMAREVAALRRANERMRRICIDGGRAVDAAAIEDSAMQPWQPLGAKSILGYNLKKSIGQRHAQLCRRMLTPEIQYLMDLGANLWITKLWKFIRDFLRW.

Topologically, residues 1–14 (MPLPQKKRWESMAK) are cytoplasmic. Residues 15–35 (GLVLGALFTSFLLLLYSYAVP) form a helical; Signal-anchor for type II membrane protein membrane-spanning segment. The Lumenal segment spans residues 36–423 (PLYTGLASTT…WKFIRDFLRW (388 aa)). The segment at 48–70 (GAAPCSPAPREPEAPTSANGSAG) is disordered. N-linked (GlcNAc...) asparagine glycans are attached at residues Asn-66, Asn-156, and Asn-312.

The protein belongs to the galactose-3-O-sulfotransferase family.

The protein resides in the golgi apparatus membrane. The enzyme catalyses a beta-D-galactosyl-(1&lt;-&gt;1')-N-acylsphing-4-enine + 3'-phosphoadenylyl sulfate = an N-acyl-1-beta-D-(3-O-sulfo)-galactosyl-sphing-4-enine + adenosine 3',5'-bisphosphate + H(+). It carries out the reaction a 1-O-alkyl-2-acyl-3-O-(beta-D-galactosyl)-sn-glycerol + 3'-phosphoadenylyl sulfate = a 1-O-alkyl-2-acyl-3-(beta-D-3-sulfogalactosyl)-sn-glycerol + adenosine 3',5'-bisphosphate + H(+). It catalyses the reaction a beta-D-Gal-(1&lt;-&gt;1')-ceramide + 3'-phosphoadenylyl sulfate = 1-(3-O-sulfo-beta-D-galactosyl)-ceramide + adenosine 3',5'-bisphosphate + H(+). The catalysed reaction is a 1,2-diacyl-3-O-(beta-D-galactosyl)-sn-glycerol + 3'-phosphoadenylyl sulfate = 1,2-diacyl-3-(3-O-sulfo-beta-D-galactosyl)-sn-glycerol + adenosine 3',5'-bisphosphate + H(+). The enzyme catalyses a beta-D-Gal-(1-&gt;4)-beta-D-Glc-(1&lt;-&gt;1)-Cer(d18:1(4E)) + 3'-phosphoadenylyl sulfate = beta-D-3-sulfogalactosyl-(1-&gt;4)-beta-D-glucosyl-(1&lt;-&gt;1')-N-acylsphing-4-enine + adenosine 3',5'-bisphosphate + H(+). Its pathway is lipid metabolism; sphingolipid metabolism. Catalyzes the transfer of a sulfate group to position 3 of non-reducing beta-galactosyl residues in glycerolipids and sphingolipids, therefore participates in the biosynthesis of sulfoglycolipids. Catalyzes the synthesis of galactosylceramide sulfate (sulfatide), a major lipid component of the myelin sheath and of monogalactosylalkylacylglycerol sulfate (seminolipid), present in spermatocytes. Seems to prefer beta-glycosides at the non-reducing termini of sugar chains attached to a lipid moiety. Also acts on lactosylceramide, galactosyl 1-alkyl-2-sn-glycerol and galactosyl diacylglycerol (in vitro). The polypeptide is Galactosylceramide sulfotransferase (Bos taurus (Bovine)).